Consider the following 90-residue polypeptide: Aminoacyl carrier protein 1 (90 aa).

Positions T6 to L84 constitute a Carrier domain. An O-(pantetheine 4'-phosphoryl)serine modification is found at S42.

4'-phosphopantetheine is transferred from CoA to a specific serine of the apo-form of this carrier protein.

Aminoacyl carrier protein. Can be charged with L-glycine via the formation of a thioester bond between the amino acid and the 4'-phosphopantetheinyl prosthetic group, catalyzed by the bll0957 ligase. The chain is Aminoacyl carrier protein 1 from Bradyrhizobium diazoefficiens (strain JCM 10833 / BCRC 13528 / IAM 13628 / NBRC 14792 / USDA 110).